A 210-amino-acid polypeptide reads, in one-letter code: FMN-dependent NADH:quinone oxidoreductase 8 (210 aa).

FMN is bound by residues Ser10 and 16–18 (SIS).

This sequence belongs to the azoreductase type 1 family. Homodimer. It depends on FMN as a cofactor.

It catalyses the reaction 2 a quinone + NADH + H(+) = 2 a 1,4-benzosemiquinone + NAD(+). The enzyme catalyses N,N-dimethyl-1,4-phenylenediamine + anthranilate + 2 NAD(+) = 2-(4-dimethylaminophenyl)diazenylbenzoate + 2 NADH + 2 H(+). Its function is as follows. Quinone reductase that provides resistance to thiol-specific stress caused by electrophilic quinones. Functionally, also exhibits azoreductase activity. Catalyzes the reductive cleavage of the azo bond in aromatic azo compounds to the corresponding amines. The protein is FMN-dependent NADH:quinone oxidoreductase 8 of Burkholderia lata (strain ATCC 17760 / DSM 23089 / LMG 22485 / NCIMB 9086 / R18194 / 383).